A 1220-amino-acid polypeptide reads, in one-letter code: DNA-directed RNA polymerase subunit beta' (1220 aa).

Cys60, Cys62, Cys75, and Cys78 together coordinate Zn(2+). Mg(2+)-binding residues include Asp449, Asp451, and Asp453. Zn(2+) is bound by residues Cys818, Cys892, Cys899, and Cys902.

This sequence belongs to the RNA polymerase beta' chain family. As to quaternary structure, the RNAP catalytic core consists of 2 alpha, 1 beta, 1 beta' and 1 omega subunit. When a sigma factor is associated with the core the holoenzyme is formed, which can initiate transcription. Mg(2+) is required as a cofactor. The cofactor is Zn(2+).

The catalysed reaction is RNA(n) + a ribonucleoside 5'-triphosphate = RNA(n+1) + diphosphate. In terms of biological role, DNA-dependent RNA polymerase catalyzes the transcription of DNA into RNA using the four ribonucleoside triphosphates as substrates. This is DNA-directed RNA polymerase subunit beta' from Lacticaseibacillus casei (strain BL23) (Lactobacillus casei).